We begin with the raw amino-acid sequence, 413 residues long: METAAKTNKRDIQDGPPKEVKLPISEALLDYHCQIKENALEQFMARIKKLREKNQKYHERNKRLKDEQIWHIRNLLKELSEEKSEGSVVVTREEVENAMKEKWKFERDQEQNLKDMRIQISNAEKLFLEKLSEKEYWEEYKNVGSEQHGKLITSLQNDINRVKENAEKMSEQYKITLEDARKRIIRETLLQLDQKKEWATENALRFIDKGSYREIWENDWLKKEIANHRKEVEELENAIHELEEENLVLIDQLFNCRLVDLKIPRRLYLTQAVGQEVPPEVPLELSETHKVIPEKSDSQPVDIKSRDVSSISFGSSGFRLSHKDSRFGQLLKIDEEASSSIEFGASDMKYLLYEDEQDFKDYVNLGPLEVKLMTVESKKMPIHFQEKETPVKFYEDVRSPESHITYKMMKSFL.

Coiled coils occupy residues 32-186 (HCQI…RIIR) and 215-255 (IWEN…QLFN).

The sequence is that of Coiled-coil domain-containing protein 83 (CCDC83) from Bos taurus (Bovine).